A 92-amino-acid chain; its full sequence is Small ribosomal subunit protein uS19c (92 aa).

This sequence belongs to the universal ribosomal protein uS19 family.

Its subcellular location is the plastid. It is found in the chloroplast. In terms of biological role, protein S19 forms a complex with S13 that binds strongly to the 16S ribosomal RNA. In Lobularia maritima (Sweet alyssum), this protein is Small ribosomal subunit protein uS19c.